A 67-amino-acid chain; its full sequence is Sec-independent protein translocase protein TatA (67 aa).

A helical membrane pass occupies residues 1–21 (MMPGPFELIVILVIVLLLFGG).

Belongs to the TatA/E family. As to quaternary structure, the Tat system comprises two distinct complexes: a TatABC complex, containing multiple copies of TatA, TatB and TatC subunits, and a separate TatA complex, containing only TatA subunits. Substrates initially bind to the TatABC complex, which probably triggers association of the separate TatA complex to form the active translocon.

The protein localises to the cell inner membrane. Part of the twin-arginine translocation (Tat) system that transports large folded proteins containing a characteristic twin-arginine motif in their signal peptide across membranes. TatA could form the protein-conducting channel of the Tat system. The sequence is that of Sec-independent protein translocase protein TatA from Ruthia magnifica subsp. Calyptogena magnifica.